A 198-amino-acid chain; its full sequence is Large ribosomal subunit protein uL13B (198 aa).

The residue at position 2 (Ser-2) is an N-acetylserine; partial. A Phosphoserine modification is found at Ser-43. Residue Lys-176 forms a Glycyl lysine isopeptide (Lys-Gly) (interchain with G-Cter in ubiquitin) linkage. 3 positions are modified to phosphoserine: Ser-181, Ser-185, and Ser-187.

The protein belongs to the universal ribosomal protein uL13 family. In terms of assembly, component of the large ribosomal subunit (LSU). Mature yeast ribosomes consist of a small (40S) and a large (60S) subunit. The 40S small subunit contains 1 molecule of ribosomal RNA (18S rRNA) and 33 different proteins (encoded by 57 genes). The large 60S subunit contains 3 rRNA molecules (25S, 5.8S and 5S rRNA) and 46 different proteins (encoded by 81 genes). In terms of processing, N-terminally acetylated by acetyltransferase NatA.

It is found in the cytoplasm. Functionally, component of the ribosome, a large ribonucleoprotein complex responsible for the synthesis of proteins in the cell. The small ribosomal subunit (SSU) binds messenger RNAs (mRNAs) and translates the encoded message by selecting cognate aminoacyl-transfer RNA (tRNA) molecules. The large subunit (LSU) contains the ribosomal catalytic site termed the peptidyl transferase center (PTC), which catalyzes the formation of peptide bonds, thereby polymerizing the amino acids delivered by tRNAs into a polypeptide chain. The nascent polypeptides leave the ribosome through a tunnel in the LSU and interact with protein factors that function in enzymatic processing, targeting, and the membrane insertion of nascent chains at the exit of the ribosomal tunnel. The protein is Large ribosomal subunit protein uL13B of Saccharomyces cerevisiae (strain ATCC 204508 / S288c) (Baker's yeast).